The chain runs to 20 residues: T cell receptor alpha joining 3 (20 aa).

In terms of assembly, alpha-beta TR is a heterodimer composed of an alpha and beta chain; disulfide-linked. The alpha-beta TR is associated with the transmembrane signaling CD3 coreceptor proteins to form the TR-CD3 (TcR or TCR). The assembly of alpha-beta TR heterodimers with CD3 occurs in the endoplasmic reticulum where a single alpha-beta TR heterodimer associates with one CD3D-CD3E heterodimer, one CD3G-CD3E heterodimer and one CD247 homodimer forming a stable octameric structure. CD3D-CD3E and CD3G-CD3E heterodimers preferentially associate with TR alpha and TR beta chains, respectively. The association of the CD247 homodimer is the last step of TcR assembly in the endoplasmic reticulum and is required for transport to the cell surface.

The protein resides in the cell membrane. J region of the variable domain of T cell receptor (TR) alpha chain that participates in the antigen recognition. Alpha-beta T cell receptors are antigen specific receptors which are essential to the immune response and are present on the cell surface of T lymphocytes. Recognize peptide-major histocompatibility (MH) (pMH) complexes that are displayed by antigen presenting cells (APC), a prerequisite for efficient T cell adaptive immunity against pathogens. Binding of alpha-beta TR to pMH complex initiates TR-CD3 clustering on the cell surface and intracellular activation of LCK that phosphorylates the ITAM motifs of CD3G, CD3D, CD3E and CD247 enabling the recruitment of ZAP70. In turn ZAP70 phosphorylates LAT, which recruits numerous signaling molecules to form the LAT signalosome. The LAT signalosome propagates signal branching to three major signaling pathways, the calcium, the mitogen-activated protein kinase (MAPK) kinase and the nuclear factor NF-kappa-B (NF-kB) pathways, leading to the mobilization of transcription factors that are critical for gene expression and essential for T cell growth and differentiation. The T cell repertoire is generated in the thymus, by V-(D)-J rearrangement. This repertoire is then shaped by intrathymic selection events to generate a peripheral T cell pool of self-MH restricted, non-autoaggressive T cells. Post-thymic interaction of alpha-beta TR with the pMH complexes shapes TR structural and functional avidity. The sequence is that of T cell receptor alpha joining 3 from Homo sapiens (Human).